Reading from the N-terminus, the 76-residue chain is MLQRFDLDSQDLLFKAESLIVNSTNRYHVTLQIARRAKQARYEEMENLSEETGIKPVLRAILEMSDELNQPEIIGG.

This sequence belongs to the RNA polymerase subunit omega family. As to quaternary structure, in cyanobacteria the RNAP catalytic core is composed of 2 alpha, 1 beta, 1 beta', 1 gamma and 1 omega subunit. When a sigma factor is associated with the core the holoenzyme is formed, which can initiate transcription.

It catalyses the reaction RNA(n) + a ribonucleoside 5'-triphosphate = RNA(n+1) + diphosphate. Its function is as follows. Promotes RNA polymerase assembly. Latches the N- and C-terminal regions of the beta' subunit thereby facilitating its interaction with the beta and alpha subunits. This Synechococcus elongatus (strain ATCC 33912 / PCC 7942 / FACHB-805) (Anacystis nidulans R2) protein is DNA-directed RNA polymerase subunit omega.